Here is a 179-residue protein sequence, read N- to C-terminus: MAATEPILATTGSPAAVPPEKLEGTGSSSAPERNCVGSSLPEASPPAPEPSSPNAAVPEAIPTPRAAASAALELPLGPAPVSVAPQAEAEARSTPGPAGSRLGPETFRQRFRQFRYQDAAGPREAFRQLRELSRQWLRPDIRTKEQIVEMLVQEQLLAILPEAARARRIRRRTDVRITG.

Residues 1–107 (MAATEPILAT…AGSRLGPETF (107 aa)) are disordered. Residues 52-80 (SPNAAVPEAIPTPRAAASAALELPLGPAP) show a composition bias toward low complexity. An SCAN box domain is found at 108-166 (RQRFRQFRYQDAAGPREAFRQLRELSRQWLRPDIRTKEQIVEMLVQEQLLAILPEAARA).

Interacts with ZNF202.

It is found in the nucleus. Its function is as follows. May regulate transcriptional activity. The protein is SCAN domain-containing protein 1 (SCAND1) of Pan paniscus (Pygmy chimpanzee).